Here is a 234-residue protein sequence, read N- to C-terminus: Glycerol-3-phosphate acyltransferase (234 aa).

A run of 6 helical transmembrane segments spans residues 4-24 (LLAI…LIAG), 56-76 (TVTL…VAFF), 90-110 (VALR…TVFA), 122-142 (AGML…VFLL), 152-172 (VASI…KYLF), and 191-211 (FHDS…IAII).

Belongs to the PlsY family. Probably interacts with PlsX.

Its subcellular location is the cell inner membrane. It carries out the reaction an acyl phosphate + sn-glycerol 3-phosphate = a 1-acyl-sn-glycero-3-phosphate + phosphate. It participates in lipid metabolism; phospholipid metabolism. Catalyzes the transfer of an acyl group from acyl-phosphate (acyl-PO(4)) to glycerol-3-phosphate (G3P) to form lysophosphatidic acid (LPA). This enzyme utilizes acyl-phosphate as fatty acyl donor, but not acyl-CoA or acyl-ACP. The chain is Glycerol-3-phosphate acyltransferase from Chlorobium chlorochromatii (strain CaD3).